The chain runs to 343 residues: Phosphate acyltransferase (343 aa).

The protein belongs to the PlsX family. Homodimer. Probably interacts with PlsY.

Its subcellular location is the cytoplasm. It catalyses the reaction a fatty acyl-[ACP] + phosphate = an acyl phosphate + holo-[ACP]. The protein operates within lipid metabolism; phospholipid metabolism. In terms of biological role, catalyzes the reversible formation of acyl-phosphate (acyl-PO(4)) from acyl-[acyl-carrier-protein] (acyl-ACP). This enzyme utilizes acyl-ACP as fatty acyl donor, but not acyl-CoA. The chain is Phosphate acyltransferase from Coxiella burnetii (strain CbuG_Q212) (Coxiella burnetii (strain Q212)).